We begin with the raw amino-acid sequence, 547 residues long: Probable high-affinity hexose transporter ght8, mitochondrial (547 aa).

Residues M1–G21 constitute a mitochondrion transit peptide. At A22–R86 the chain is on the mitochondrial intermembrane side. Residues V87–V107 form a helical membrane-spanning segment. Residues P108 to Q112 lie on the Cytoplasmic side of the membrane. Residues I113–G133 form a helical membrane-spanning segment. At F134–R144 the chain is on the mitochondrial intermembrane side. A helical membrane pass occupies residues G145–I165. Residues N166–R179 are Cytoplasmic-facing. A helical membrane pass occupies residues V180–P200. Topologically, residues E201–A304 are mitochondrial intermembrane. The helical transmembrane segment at L305–F325 threads the bilayer. At G326–R328 the chain is on the cytoplasmic side. The helical transmembrane segment at M329 to G349 threads the bilayer. Residues N350–R363 are Mitochondrial intermembrane-facing. Residues A364–G384 form a helical membrane-spanning segment. Residues P385–A404 lie on the Cytoplasmic side of the membrane. Residues A405–I425 traverse the membrane as a helical segment. Residues S426–K432 lie on the Mitochondrial intermembrane side of the membrane. A helical membrane pass occupies residues Y433–H453. The Cytoplasmic segment spans residues E454 to A547. A disordered region spans residues G482–A547. Residues T517–S529 are compositionally biased toward low complexity. Residue S519 is modified to Phosphoserine. Residues T523 and T526 each carry the phosphothreonine modification. 4 positions are modified to phosphoserine: S527, S528, S529, and S537.

This sequence belongs to the major facilitator superfamily. Sugar transporter (TC 2.A.1.1) family.

Its subcellular location is the mitochondrion membrane. In Schizosaccharomyces pombe (strain 972 / ATCC 24843) (Fission yeast), this protein is Probable high-affinity hexose transporter ght8, mitochondrial (ght8).